We begin with the raw amino-acid sequence, 143 residues long: Nucleoside diphosphate kinase (143 aa).

Positions 11, 59, 87, 93, 104, and 114 each coordinate ATP. The active-site Pros-phosphohistidine intermediate is His-117.

The protein belongs to the NDK family. In terms of assembly, homotetramer. The cofactor is Mg(2+).

It is found in the cytoplasm. It catalyses the reaction a 2'-deoxyribonucleoside 5'-diphosphate + ATP = a 2'-deoxyribonucleoside 5'-triphosphate + ADP. The catalysed reaction is a ribonucleoside 5'-diphosphate + ATP = a ribonucleoside 5'-triphosphate + ADP. Functionally, major role in the synthesis of nucleoside triphosphates other than ATP. The ATP gamma phosphate is transferred to the NDP beta phosphate via a ping-pong mechanism, using a phosphorylated active-site intermediate. The sequence is that of Nucleoside diphosphate kinase from Escherichia coli O81 (strain ED1a).